The primary structure comprises 232 residues: Large ribosomal subunit protein uL1 (232 aa).

Belongs to the universal ribosomal protein uL1 family. As to quaternary structure, part of the 50S ribosomal subunit.

Functionally, binds directly to 23S rRNA. The L1 stalk is quite mobile in the ribosome, and is involved in E site tRNA release. Its function is as follows. Protein L1 is also a translational repressor protein, it controls the translation of the L11 operon by binding to its mRNA. The chain is Large ribosomal subunit protein uL1 from Burkholderia cenocepacia (strain ATCC BAA-245 / DSM 16553 / LMG 16656 / NCTC 13227 / J2315 / CF5610) (Burkholderia cepacia (strain J2315)).